The chain runs to 628 residues: MPNLIADPERLKERLELLPTSAGVYLMRDEAGEILYVGKAKNLRNRVRSYFQPGHDHSPRIAIMVGKVHDFELILTDTEAEALVLEDNLIKTHKPRYNVLLKDDKQYPYLCITWSEEYPRIFVTRRRGSGHPEDRYFGPYTDAGALHSTLGLLKKLFPLRQRNTPVFKDRPCINYEMGRCPGLCQRLISPQEYRATIRQIQMILQGRTAELLAQLEDQMQTAAAAMNFEHAARLRDRITGLNQLGAHQKITVPDSSVSRDAVALAADAALVSIQLFQVRSGKLIGRLGFSAAASGEDPGHILQRVLEEHYRASASEEIPLEVLTQHPLPEADILATWLAEKKGRKVEIHAPQRQIKAELVEMVARNAEAELQRLERFSRRQEKGLLNLAEALELPSVPRRMECYDISHIQGTDTVASRVVFVDGAPAKQYYRHYKIRDPRIVAGRPDDFASMAEVISRRFARAESEPEGDLPDLVVIDGGKGQLSAARAVMEELSYGDVPTIGLAKRLEEVFLPGRSDPVLIAQGDPALHLLQRIRDEAHRFAVSFHREQRGKRMTRSSLDDIPGIGPAKRKILLDTFRSVPVLEKASFEEIAKTPGIGSRLAQVIHTYFHGEPEAVARALEAEQAAN.

A GIY-YIG domain is found at 20–99; the sequence is TSAGVYLMRD…IKTHKPRYNV (80 aa). One can recognise a UVR domain in the interval 209 to 244; sequence AELLAQLEDQMQTAAAAMNFEHAARLRDRITGLNQL.

Belongs to the UvrC family. As to quaternary structure, interacts with UvrB in an incision complex.

The protein resides in the cytoplasm. Functionally, the UvrABC repair system catalyzes the recognition and processing of DNA lesions. UvrC both incises the 5' and 3' sides of the lesion. The N-terminal half is responsible for the 3' incision and the C-terminal half is responsible for the 5' incision. The sequence is that of UvrABC system protein C from Gloeobacter violaceus (strain ATCC 29082 / PCC 7421).